The following is a 305-amino-acid chain: Methionyl-tRNA formyltransferase (305 aa).

109-112 is a (6S)-5,6,7,8-tetrahydrofolate binding site; that stretch reads SLLP.

Belongs to the Fmt family.

The catalysed reaction is L-methionyl-tRNA(fMet) + (6R)-10-formyltetrahydrofolate = N-formyl-L-methionyl-tRNA(fMet) + (6S)-5,6,7,8-tetrahydrofolate + H(+). Attaches a formyl group to the free amino group of methionyl-tRNA(fMet). The formyl group appears to play a dual role in the initiator identity of N-formylmethionyl-tRNA by promoting its recognition by IF2 and preventing the misappropriation of this tRNA by the elongation apparatus. The polypeptide is Methionyl-tRNA formyltransferase (Roseobacter denitrificans (strain ATCC 33942 / OCh 114) (Erythrobacter sp. (strain OCh 114))).